The following is a 268-amino-acid chain: Tryptophan synthase alpha chain (268 aa).

Active-site proton acceptor residues include Glu-49 and Asp-60.

It belongs to the TrpA family. In terms of assembly, tetramer of two alpha and two beta chains.

The enzyme catalyses (1S,2R)-1-C-(indol-3-yl)glycerol 3-phosphate + L-serine = D-glyceraldehyde 3-phosphate + L-tryptophan + H2O. It participates in amino-acid biosynthesis; L-tryptophan biosynthesis; L-tryptophan from chorismate: step 5/5. Functionally, the alpha subunit is responsible for the aldol cleavage of indoleglycerol phosphate to indole and glyceraldehyde 3-phosphate. The polypeptide is Tryptophan synthase alpha chain (Escherichia coli O7:K1 (strain IAI39 / ExPEC)).